The primary structure comprises 302 residues: Bifunctional ligase/repressor BirA (302 aa).

Residues 14–33 (QPKVRSELEKFSKNLEEDIQ) constitute a DNA-binding region (H-T-H motif). Residues 62-236 (QISTALFPYS…HLYTRLNIFE (175 aa)) enclose the BPL/LPL catalytic domain. Biotin is bound by residues 80–82 (STN), Q103, 107–109 (RGR), and K167.

The protein belongs to the biotin--protein ligase family.

It catalyses the reaction biotin + L-lysyl-[protein] + ATP = N(6)-biotinyl-L-lysyl-[protein] + AMP + diphosphate + H(+). In terms of biological role, acts both as a biotin--[acetyl-CoA-carboxylase] ligase and a biotin-operon repressor. In the presence of ATP, BirA activates biotin to form the BirA-biotinyl-5'-adenylate (BirA-bio-5'-AMP or holoBirA) complex. HoloBirA can either transfer the biotinyl moiety to the biotin carboxyl carrier protein (BCCP) subunit of acetyl-CoA carboxylase, or bind to the biotin operator site and inhibit transcription of the operon. The polypeptide is Bifunctional ligase/repressor BirA (Haemophilus influenzae (strain ATCC 51907 / DSM 11121 / KW20 / Rd)).